Here is a 608-residue protein sequence, read N- to C-terminus: MSAISLINSGVAWFVAAAVLAFLFSFQKALSGWIAGIGGAVGSLYTAAAGFTVLTGAVGVSGALSLVSYDVQISPLNAIWLITLGLCGLFVSLYNIDWHRHAQVKCNGLQINMLMAAAVCAVIASNLGMFVVMAEIMALCAVFLTSNSKEGKLWFALGRLGTLLLAIACWLLWQRYGTLDLRLLDMRMQQLPLGSDIWLLGVIGFGLLAGIIPLHGWVPQAHANASAPAAALFSTVVMKIGLLGILTLSLLGGNAPLWWGIALLVLGMITAFVGGLYALVEHNIQRLLAYHTLENIGIILLGLGAGVTGIALEQPALIALGLVGGLYHLLNHSLFKSVLFLGAGSVWFRTGHRDIEKLGGIGKKMPVISIAMLVGLMAMAALPPLNGFAGEWVIYQSFFKLSNSGAFVARLLGPLLAVGLAITGALAVMCMAKVYGVTFLGAPRTKEAENATCAPLLMSVSVVALAICCVIGGVAAPWLLPMLSAAVPLPLEPANTTVSQPMITLLLIACPLLPFIIMAICKGDRLPSRSRGAAWVCGYDHEKSMVITAHGFAMPVKQAFAPVLKLRKWLNPVSLVPGWQCEGSALLFRRMALVELAVLVVIIVSRGA.

The next 12 helical transmembrane spans lie at 10 to 26 (GVAWFVAAAVLAFLFSF), 44 to 67 (LYTAAAGFTVLTGAVGVSGALSLV), 76 to 93 (LNAIWLITLGLCGLFVSL), 116 to 140 (AAAVCAVIASNLGMFVVMAEIMALC), 153 to 173 (LWFALGRLGTLLLAIACWLLW), 197 to 218 (IWLLGVIGFGLLAGIIPLHGWV), 229 to 251 (AAALFSTVVMKIGLLGILTLSLL), 258 to 280 (WWGIALLVLGMITAFVGGLYALV), 296 to 312 (IGIILLGLGAGVTGIAL), 416 to 440 (LAVGLAITGALAVMCMAKVYGVTFL), 453 to 476 (CAPLLMSVSVVALAICCVIGGVAA), and 502 to 521 (MITLLLIACPLLPFIIMAIC).

The protein belongs to the complex I subunit 4 family. FHL comprises of a formate dehydrogenase, unidentified electron carriers and a hydrogenase (isoenzyme 3). In this non-energy conserving pathway molecular hydrogen and carbodioxide from formate are released.

Its subcellular location is the cell inner membrane. This chain is Formate hydrogenlyase subunit 3 (hycC), found in Escherichia coli (strain K12).